The chain runs to 285 residues: 1,4-dihydroxy-2-naphthoyl-CoA synthase (285 aa).

Substrate contacts are provided by residues arginine 45, 84–88, tyrosine 97, 129–133, threonine 155, serine 161, tyrosine 258, and lysine 273; these read AGGDQ and YSIGG. 154 to 156 serves as a coordination point for hydrogencarbonate; the sequence is QTG.

Belongs to the enoyl-CoA hydratase/isomerase family. MenB subfamily. Homohexamer. Requires hydrogencarbonate as cofactor.

The catalysed reaction is 2-succinylbenzoyl-CoA + H(+) = 1,4-dihydroxy-2-naphthoyl-CoA + H2O. The protein operates within quinol/quinone metabolism; 1,4-dihydroxy-2-naphthoate biosynthesis; 1,4-dihydroxy-2-naphthoate from chorismate: step 6/7. Its pathway is quinol/quinone metabolism; menaquinone biosynthesis. Converts o-succinylbenzoyl-CoA (OSB-CoA) to 1,4-dihydroxy-2-naphthoyl-CoA (DHNA-CoA). The protein is 1,4-dihydroxy-2-naphthoyl-CoA synthase of Salmonella typhimurium (strain LT2 / SGSC1412 / ATCC 700720).